A 566-amino-acid polypeptide reads, in one-letter code: Proline--tRNA ligase (566 aa).

Belongs to the class-II aminoacyl-tRNA synthetase family. ProS type 1 subfamily. In terms of assembly, homodimer.

The protein resides in the cytoplasm. The enzyme catalyses tRNA(Pro) + L-proline + ATP = L-prolyl-tRNA(Pro) + AMP + diphosphate. Its function is as follows. Catalyzes the attachment of proline to tRNA(Pro) in a two-step reaction: proline is first activated by ATP to form Pro-AMP and then transferred to the acceptor end of tRNA(Pro). As ProRS can inadvertently accommodate and process non-cognate amino acids such as alanine and cysteine, to avoid such errors it has two additional distinct editing activities against alanine. One activity is designated as 'pretransfer' editing and involves the tRNA(Pro)-independent hydrolysis of activated Ala-AMP. The other activity is designated 'posttransfer' editing and involves deacylation of mischarged Ala-tRNA(Pro). The misacylated Cys-tRNA(Pro) is not edited by ProRS. This Bacillus cereus (strain AH187) protein is Proline--tRNA ligase.